Consider the following 973-residue polypeptide: Vacuolar protein sorting-associated protein 18 homolog (973 aa).

Residue Ala-2 is modified to N-acetylalanine. A phosphoserine mark is found at Ser-3, Ser-11, and Ser-13. Position 362 is an N6-acetyllysine (Lys-362). The stretch at 454-481 forms a coiled coil; the sequence is EEIALKFLEARQEEALAEFLQRKLASLK. A CHCR repeat occupies 618–772; sequence GSRLDARQLI…VVQEEEDVQT (155 aa). At Ser-689 the chain carries Phosphoserine. A coiled-coil region spans residues 802–848; sequence KEAICSSLKAYNHHIQELQREMEEATASAQRIRRDLQELRGRYGTVE. The RING-type zinc-finger motif lies at 853–947; it reads CATCDFPLLN…ELVAAECVYC (95 aa). Residues 903-929 are disordered; it reads GAAPPPAKGSARAKEAEGGAATAGPSR. A Phosphoserine modification is found at Ser-912.

Belongs to the VPS18 family. In terms of assembly, core component of at least two putative endosomal tethering complexes, the homotypic fusion and vacuole protein sorting (HOPS) complex and the class C core vacuole/endosome tethering (CORVET) complex. Their common core is composed of the class C Vps proteins VPS11, VPS16, VPS18 and VPS33A, which in HOPS further associates with VPS39 and VPS41 and in CORVET with VPS8 and TGFBRAP1. Interacts with RAB5C. Interacts with HOOK1. Interacts with STX7, MON1B. Associates with adaptor protein complex 3 (AP-3) and clathrin:AP-3 complexes. Interacts with SYNPO2. Interacts with PLEKHM1. In terms of tissue distribution, ubiquitous. Expression was highest in heart and low in lung.

It localises to the late endosome membrane. It is found in the lysosome membrane. The protein resides in the early endosome. Its subcellular location is the cytoplasmic vesicle. The protein localises to the autophagosome. It localises to the clathrin-coated vesicle. Functionally, plays a role in vesicle-mediated protein trafficking to lysosomal compartments including the endocytic membrane transport and autophagic pathways. Believed to act as a core component of the putative HOPS and CORVET endosomal tethering complexes which are proposed to be involved in the Rab5-to-Rab7 endosome conversion probably implicating MON1A/B, and via binding SNAREs and SNARE complexes to mediate tethering and docking events during SNARE-mediated membrane fusion. The HOPS complex is proposed to be recruited to Rab7 on the late endosomal membrane and to regulate late endocytic, phagocytic and autophagic traffic towards lysosomes. The CORVET complex is proposed to function as a Rab5 effector to mediate early endosome fusion probably in specific endosome subpopulations. Required for fusion of endosomes and autophagosomes with lysosomes. Involved in dendrite development of Pukinje cells. This Homo sapiens (Human) protein is Vacuolar protein sorting-associated protein 18 homolog.